The following is a 53-amino-acid chain: Sec-independent protein translocase protein TatA (53 aa).

The chain crosses the membrane as a helical span at residues 1-21 (MGMSFSHLLIVLLIIFVLFGA).

The protein belongs to the TatA/E family. The Tat system comprises two distinct complexes: a TatABC complex, containing multiple copies of TatA, TatB and TatC subunits, and a separate TatA complex, containing only TatA subunits. Substrates initially bind to the TatABC complex, which probably triggers association of the separate TatA complex to form the active translocon.

The protein resides in the cell inner membrane. Its function is as follows. Part of the twin-arginine translocation (Tat) system that transports large folded proteins containing a characteristic twin-arginine motif in their signal peptide across membranes. TatA could form the protein-conducting channel of the Tat system. This is Sec-independent protein translocase protein TatA from Rickettsia rickettsii (strain Iowa).